The primary structure comprises 331 residues: Putative peptidyl-prolyl cis-trans isomerase RF_0616 (331 aa).

Residues 28-50 (NPTTIEQTASNNSSTDENQTSIN) form a disordered region. A PPIase FKBP-type domain is found at 128–226 (GHVVTVFYQI…NNEVKIYDDE (99 aa)).

The catalysed reaction is [protein]-peptidylproline (omega=180) = [protein]-peptidylproline (omega=0). The chain is Putative peptidyl-prolyl cis-trans isomerase RF_0616 from Rickettsia felis (strain ATCC VR-1525 / URRWXCal2) (Rickettsia azadi).